A 468-amino-acid chain; its full sequence is MTSCSSFSGGKACRPADDSALTPLVADKAAAHPCYSRHGHHRFARMHLPVAPACNLQCNYCNRKFDCSNESRPGVSSTLLTPEQAVVKVRQVAQAIPQLSVVGIAGPGDPLANIARTFRTLELIREQLPDLKLCLSTNGLVLPDAVDRLLDVGVDHVTVTINTLDAEIAAQIYAWLWLDGERYSGREAGEILIARQLEGVRRLTAKGVLVKINSVLIPGINDSGMAGVSRALRASGAFIHNIMPLIARPEHGTVFGLNGQPEPDAETLAATRSRCGEVMPQMTHCHQCRADAIGMLGEDRSQQFTQLPAPESLPAWLPILHQRAQLHASIATRGESEADDACLVAVASSRGDVIDCHFGHADRFYIYSLSAAGMVLVNERFTPKYCQGRDDCEPQDNAARFAAILELLADVKAVFCVRIGHTPWQQLEQEGIEPCVDGAWRPVSEVLPAWWQQRRGSWPAALPHKGVA.

The 250-residue stretch at 40 to 289 folds into the Radical SAM core domain; sequence HHRFARMHLP…PQMTHCHQCR (250 aa). The [4Fe-4S] cluster site is built by Cys54 and Cys58. Tyr60 is an S-adenosyl-L-methionine binding site. Position 61 (Cys61) interacts with [4Fe-4S] cluster. S-adenosyl-L-methionine contacts are provided by Gly108, Thr160, and Ile212. Cys285 and Cys288 together coordinate [4Fe-4S] cluster.

This sequence belongs to the radical SAM superfamily. NifB family. [4Fe-4S] cluster is required as a cofactor.

It participates in cofactor biosynthesis; Fe-Mo cofactor biosynthesis. Involved in the biosynthesis of the iron-molybdenum cofactor (FeMo-co or M-cluster) found in the dinitrogenase enzyme of the nitrogenase complex in nitrogen-fixing microorganisms. NifB catalyzes the crucial step of radical SAM-dependent carbide insertion that occurs concomitant with the insertion of a 9th sulfur and the rearrangement/coupling of two [4Fe-4S] clusters into a [8Fe-9S-C] cluster, the precursor to the M-cluster. The sequence is that of FeMo cofactor biosynthesis protein NifB (nifB) from Klebsiella pneumoniae.